Reading from the N-terminus, the 246-residue chain is MTTGDCCHLPGSLCDCTGSATFLKSLEESDLGRPQYVTQVTAKDGQLLSTVIKALGTQSDGPICRICHEGGNGERLLSPCDCTGTLGTVHKTCLEKWLSSSNTSYCELCHTEFAVERRPRPVTEWLKDPGPRNEKRTLFCDMVCFLFITPLAAISGWLCLRGAQDHLQFNSRLEAVGLIALTIALFTIYVLWTLVSFRYHCQLYSEWRRTNQKVLLLIPDSKTAPTTHHSLLSSKLLKSASDETTV.

The RING-CH-type zinc finger occupies 56-116 (GTQSDGPICR…ELCHTEFAVE (61 aa)). Zn(2+) is bound by residues Cys-64, Cys-67, Cys-80, Cys-82, His-90, Cys-93, Cys-106, and Cys-109. Transmembrane regions (helical) follow at residues 138–158 (LFCD…SGWL) and 175–195 (AVGL…WTLV).

The protein localises to the endoplasmic reticulum membrane. Its subcellular location is the lysosome membrane. It localises to the endosome membrane. The catalysed reaction is S-ubiquitinyl-[E2 ubiquitin-conjugating enzyme]-L-cysteine + [acceptor protein]-L-lysine = [E2 ubiquitin-conjugating enzyme]-L-cysteine + N(6)-ubiquitinyl-[acceptor protein]-L-lysine.. It functions in the pathway protein modification; protein ubiquitination. Functionally, E3 ubiquitin-protein ligase which may be involved in endosomal trafficking. E3 ubiquitin ligases accept ubiquitin from an E2 ubiquitin-conjugating enzyme in the form of a thioester and then directly transfer the ubiquitin to targeted substrates. The chain is E3 ubiquitin-protein ligase MARCHF2 (marchf2) from Xenopus tropicalis (Western clawed frog).